A 278-amino-acid polypeptide reads, in one-letter code: Large ribosomal subunit protein uL2 (278 aa).

The interval 222–278 is disordered; it reads GVVMNPIDHPHGGGEGRTSGGRHPVTPWGKPTKGKKTRSNKSTDKFILISRHKRKKK.

The protein belongs to the universal ribosomal protein uL2 family. As to quaternary structure, part of the 50S ribosomal subunit. Forms a bridge to the 30S subunit in the 70S ribosome.

Its function is as follows. One of the primary rRNA binding proteins. Required for association of the 30S and 50S subunits to form the 70S ribosome, for tRNA binding and peptide bond formation. It has been suggested to have peptidyltransferase activity; this is somewhat controversial. Makes several contacts with the 16S rRNA in the 70S ribosome. In Rhodopseudomonas palustris (strain ATCC BAA-98 / CGA009), this protein is Large ribosomal subunit protein uL2.